A 421-amino-acid chain; its full sequence is Ankyrin repeat domain-containing protein 61 (421 aa).

ANK repeat units lie at residues 27-57 (TLHS…NQPL), 74-103 (QPIF…DPEV), 107-146 (QGFT…NAVL), 166-195 (NKHS…QVNA), 199-228 (SSMT…NVNC), 233-272 (TGNT…QVNA), 276-305 (EGQT…NVNI), and 309-342 (NGES…PLRL).

This chain is Ankyrin repeat domain-containing protein 61 (Ankrd61), found in Mus musculus (Mouse).